A 340-amino-acid polypeptide reads, in one-letter code: Deubiquitinase SseL (340 aa).

The active site involves His-223. Cys-285 serves as the catalytic Nucleophile.

This sequence belongs to the peptidase C79 family.

It is found in the secreted. The protein localises to the host cytoplasm. In terms of biological role, effector proteins function to alter host cell physiology and promote bacterial survival in host tissues. This protease targets the host cell ubiquitin pathway by acting as a deubiquitinase in infected host cells. This chain is Deubiquitinase SseL (sseL), found in Salmonella choleraesuis (strain SC-B67).